Reading from the N-terminus, the 552-residue chain is Putative transport protein APJL_0985 (552 aa).

Transmembrane regions (helical) follow at residues 4–24 (IAII…IGHI), 29–49 (VGLG…CTHL), 65–85 (FGLI…FFAS), 95–115 (GFAV…HKLF), and 161–181 (IAYP…RIIF). RCK C-terminal domains lie at 190–275 (QEFD…ILGE) and 277–360 (ADVS…IIGD). A run of 6 helical transmembrane segments spans residues 370-390 (MLPI…PLYL), 403-425 (GGPL…YWFM), 438-458 (IVLF…DTLL), 463-483 (LAWM…TGFV), 492-512 (YLSL…LAFA), and 529-549 (VYPL…ILLW).

The protein belongs to the AAE transporter (TC 2.A.81) family. YidE subfamily.

It is found in the cell membrane. This is Putative transport protein APJL_0985 from Actinobacillus pleuropneumoniae serotype 3 (strain JL03).